Consider the following 32-residue polypeptide: Cytochrome b6-f complex subunit 7 (32 aa).

The helical transmembrane segment at 9-27 (AAVFWVLIPVGLAGGALLL) threads the bilayer.

It belongs to the PetM family. As to quaternary structure, the 4 large subunits of the cytochrome b6-f complex are cytochrome b6, subunit IV (17 kDa polypeptide, PetD), cytochrome f and the Rieske protein, while the 4 small subunits are PetG, PetL, PetM and PetN. The complex functions as a dimer.

The protein localises to the cellular thylakoid membrane. Functionally, component of the cytochrome b6-f complex, which mediates electron transfer between photosystem II (PSII) and photosystem I (PSI), cyclic electron flow around PSI, and state transitions. This Prochlorococcus marinus (strain MIT 9303) protein is Cytochrome b6-f complex subunit 7.